A 120-amino-acid polypeptide reads, in one-letter code: Fumarate reductase subunit D (120 aa).

3 consecutive transmembrane segments (helical) span residues 25–45 (FAMLTPVTILVLGIMVPLGIL), 57–77 (GFVTSFIGALFTIATLALPMW), and 100–120 (IACYATAFLVSALAIIFVFMI).

Belongs to the FrdD family. Part of an enzyme complex containing four subunits: a flavoprotein (FrdA), an iron-sulfur protein (FrdB), and two hydrophobic anchor proteins (FrdC and FrdD).

It localises to the cell inner membrane. Functionally, anchors the catalytic components of the fumarate reductase complex to the cell membrane, binds quinones. The chain is Fumarate reductase subunit D from Photobacterium profundum (strain SS9).